The primary structure comprises 582 residues: Pineapple eye protein (582 aa).

The C2HC pre-PHD-type zinc finger occupies 6-44 (ELQCLICKYSDTDDLVFGEWMIVRNLQVHYFCLLLSTHL). The segment at 6 to 119 (ELQCLICKYS…QYKSYCYKCR (114 aa)) is extended PHD domain (ePHD). A PHD-type; atypical zinc finger spans residues 72–119 (RKCWYCNKIGASLQCDRCRSLFHLKCGLENRAVFEFCGQYKSYCYKCR). Disordered stretches follow at residues 292–311 (PART…DGSF) and 323–422 (RSLT…ASEI). Positions 340-363 (SSNITVIFSQPKSNATSERLSLSP) are enriched in polar residues. Positions 383-399 (SIDENHSPQPIARRDTS) are enriched in basic and acidic residues.

Its function is as follows. Required for survival of imaginal disk cells possibly by regulation of cell apoptosis. Required for germline stem cell self-renewal through mediation of BMP signaling. This is Pineapple eye protein from Drosophila melanogaster (Fruit fly).